A 117-amino-acid polypeptide reads, in one-letter code: Large ribosomal subunit protein bL20 (117 aa).

It belongs to the bacterial ribosomal protein bL20 family.

In terms of biological role, binds directly to 23S ribosomal RNA and is necessary for the in vitro assembly process of the 50S ribosomal subunit. It is not involved in the protein synthesizing functions of that subunit. The polypeptide is Large ribosomal subunit protein bL20 (Rickettsia akari (strain Hartford)).